The chain runs to 198 residues: A-type ATP synthase subunit E (198 aa).

Belongs to the V-ATPase E subunit family. In terms of assembly, has multiple subunits with at least A(3), B(3), C, D, E, F, H, I and proteolipid K(x).

It localises to the cell membrane. Component of the A-type ATP synthase that produces ATP from ADP in the presence of a proton gradient across the membrane. This is A-type ATP synthase subunit E from Pyrococcus horikoshii (strain ATCC 700860 / DSM 12428 / JCM 9974 / NBRC 100139 / OT-3).